Reading from the N-terminus, the 163-residue chain is Putative 4-hydroxy-4-methyl-2-oxoglutarate aldolase (163 aa).

Substrate-binding positions include 76-79 (GDML) and Arg-98. Asp-99 is an a divalent metal cation binding site.

Belongs to the class II aldolase/RraA-like family. As to quaternary structure, homotrimer. The cofactor is a divalent metal cation.

It catalyses the reaction 4-hydroxy-4-methyl-2-oxoglutarate = 2 pyruvate. The catalysed reaction is oxaloacetate + H(+) = pyruvate + CO2. In terms of biological role, catalyzes the aldol cleavage of 4-hydroxy-4-methyl-2-oxoglutarate (HMG) into 2 molecules of pyruvate. Also contains a secondary oxaloacetate (OAA) decarboxylase activity due to the common pyruvate enolate transition state formed following C-C bond cleavage in the retro-aldol and decarboxylation reactions. This is Putative 4-hydroxy-4-methyl-2-oxoglutarate aldolase from Pseudomonas fluorescens (strain ATCC BAA-477 / NRRL B-23932 / Pf-5).